Consider the following 165-residue polypeptide: Glutamyl-tRNA(Gln) amidotransferase subunit F, mitochondrial (165 aa).

A mitochondrion-targeting transit peptide spans 1–19 (MKSILRSTTRNLITSSRRF).

It belongs to the GatF family. Subunit of the heterotrimeric GatFAB amidotransferase (AdT) complex, composed of A, B and F subunits.

The protein localises to the mitochondrion inner membrane. It carries out the reaction L-glutamyl-tRNA(Gln) + L-glutamine + ATP + H2O = L-glutaminyl-tRNA(Gln) + L-glutamate + ADP + phosphate + H(+). Allows the formation of correctly charged Gln-tRNA(Gln) through the transamidation of misacylated Glu-tRNA(Gln) in the mitochondria. The reaction takes place in the presence of glutamine and ATP through an activated gamma-phospho-Glu-tRNA(Gln). Required for proper protein synthesis within the mitochondrion. The polypeptide is Glutamyl-tRNA(Gln) amidotransferase subunit F, mitochondrial (Candida albicans (strain WO-1) (Yeast)).